The chain runs to 139 residues: MDSLTVNVVTPNGLVYDHHAKIVVAKTTDGEIGILPKHAPIIVPLAIDEVRIKRTDSDTHVDWVAVNGGIMEVRDNVVSIIADSAERERDIDVPRAERAKQRAERLIEEAKAKDDRDQLRRATVALHRAINRINVSKHG.

This sequence belongs to the ATPase epsilon chain family. As to quaternary structure, F-type ATPases have 2 components, CF(1) - the catalytic core - and CF(0) - the membrane proton channel. CF(1) has five subunits: alpha(3), beta(3), gamma(1), delta(1), epsilon(1). CF(0) has three main subunits: a, b and c.

It localises to the cell membrane. Functionally, produces ATP from ADP in the presence of a proton gradient across the membrane. In Enterococcus faecalis (strain ATCC 700802 / V583), this protein is ATP synthase epsilon chain.